The sequence spans 151 residues: 3-dehydroquinate dehydratase (151 aa).

The Proton acceptor role is filled by Tyr26. 3 residues coordinate substrate: Asn77, His83, and Asp90. The active-site Proton donor is the His103. Residues 104–105 (LS) and Arg114 contribute to the substrate site.

This sequence belongs to the type-II 3-dehydroquinase family. In terms of assembly, homododecamer.

It catalyses the reaction 3-dehydroquinate = 3-dehydroshikimate + H2O. Its pathway is metabolic intermediate biosynthesis; chorismate biosynthesis; chorismate from D-erythrose 4-phosphate and phosphoenolpyruvate: step 3/7. Its function is as follows. Catalyzes a trans-dehydration via an enolate intermediate. The sequence is that of 3-dehydroquinate dehydratase from Pelodictyon phaeoclathratiforme (strain DSM 5477 / BU-1).